A 751-amino-acid polypeptide reads, in one-letter code: Putative tyrosine-protein kinase EpsB (751 aa).

Topologically, residues 1-31 are cytoplasmic; sequence MTQNLSQPPAVNAPESELDLVRYLDVLVANR. The chain crosses the membrane as a helical span at residues 32–52; the sequence is WLIAGIAAVVMLLGATYAFLA. Over 53 to 444 the chain is Periplasmic; it reads RPVYEADVLV…VPEEPVKPKK (392 aa). The helical transmembrane segment at 445–465 threads the bilayer; it reads LTVTALAGVLGVVLGVVAAFV. At 466–751 the chain is on the cytoplasmic side; sequence RNTLFGGITE…PSAEAEAESA (286 aa).

The protein belongs to the etk/wzc family.

It localises to the cell inner membrane. The enzyme catalyses L-tyrosyl-[protein] + ATP = O-phospho-L-tyrosyl-[protein] + ADP + H(+). Functionally, probably involved in polymerization and/or export of exopolysaccharide EPS I which functions as a virulence factor. May be involved in an ATP-dependent process in the pathway for EPS I production, possibly export of the trimeric repeat units across the inner membrane or their polymerization. In Ralstonia nicotianae (strain ATCC BAA-1114 / GMI1000) (Ralstonia solanacearum), this protein is Putative tyrosine-protein kinase EpsB (epsB).